The chain runs to 294 residues: Acetyl-coenzyme A carboxylase carboxyl transferase subunit beta (294 aa).

Residues I25–E294 enclose the CoA carboxyltransferase N-terminal domain. Residues C29, C32, C48, and C51 each contribute to the Zn(2+) site. The C4-type zinc-finger motif lies at C29–C51.

Belongs to the AccD/PCCB family. As to quaternary structure, acetyl-CoA carboxylase is a heterohexamer composed of biotin carboxyl carrier protein (AccB), biotin carboxylase (AccC) and two subunits each of ACCase subunit alpha (AccA) and ACCase subunit beta (AccD). It depends on Zn(2+) as a cofactor.

The protein localises to the cytoplasm. It carries out the reaction N(6)-carboxybiotinyl-L-lysyl-[protein] + acetyl-CoA = N(6)-biotinyl-L-lysyl-[protein] + malonyl-CoA. It functions in the pathway lipid metabolism; malonyl-CoA biosynthesis; malonyl-CoA from acetyl-CoA: step 1/1. Functionally, component of the acetyl coenzyme A carboxylase (ACC) complex. Biotin carboxylase (BC) catalyzes the carboxylation of biotin on its carrier protein (BCCP) and then the CO(2) group is transferred by the transcarboxylase to acetyl-CoA to form malonyl-CoA. This chain is Acetyl-coenzyme A carboxylase carboxyl transferase subunit beta, found in Blochmanniella pennsylvanica (strain BPEN).